The chain runs to 611 residues: Dihydroxy-acid dehydratase (611 aa).

Residue D82 coordinates Mg(2+). C123 provides a ligand contact to [2Fe-2S] cluster. D124 and K125 together coordinate Mg(2+). K125 carries the post-translational modification N6-carboxylysine. C192 lines the [2Fe-2S] cluster pocket. Mg(2+) is bound at residue E489. The active-site Proton acceptor is S515. Residues 565–574 show a composition bias toward basic and acidic residues; it reads ERRKAEEARG. The segment at 565–586 is disordered; the sequence is ERRKAEEARGKKAFTPPTRQRE.

This sequence belongs to the IlvD/Edd family. As to quaternary structure, homodimer. It depends on [2Fe-2S] cluster as a cofactor. Mg(2+) serves as cofactor.

The enzyme catalyses (2R)-2,3-dihydroxy-3-methylbutanoate = 3-methyl-2-oxobutanoate + H2O. The catalysed reaction is (2R,3R)-2,3-dihydroxy-3-methylpentanoate = (S)-3-methyl-2-oxopentanoate + H2O. Its pathway is amino-acid biosynthesis; L-isoleucine biosynthesis; L-isoleucine from 2-oxobutanoate: step 3/4. The protein operates within amino-acid biosynthesis; L-valine biosynthesis; L-valine from pyruvate: step 3/4. In terms of biological role, functions in the biosynthesis of branched-chain amino acids. Catalyzes the dehydration of (2R,3R)-2,3-dihydroxy-3-methylpentanoate (2,3-dihydroxy-3-methylvalerate) into 2-oxo-3-methylpentanoate (2-oxo-3-methylvalerate) and of (2R)-2,3-dihydroxy-3-methylbutanoate (2,3-dihydroxyisovalerate) into 2-oxo-3-methylbutanoate (2-oxoisovalerate), the penultimate precursor to L-isoleucine and L-valine, respectively. This is Dihydroxy-acid dehydratase from Parabacteroides distasonis (strain ATCC 8503 / DSM 20701 / CIP 104284 / JCM 5825 / NCTC 11152).